Here is a 72-residue protein sequence, read N- to C-terminus: MEYAARRNQKGAFEGFYKLIMRRNSVYVTFIIAGAFFGERAVDYGVHKLWERNNVGKRYEDISVLGQRPVEE.

Residues 1–25 lie on the Mitochondrial matrix side of the membrane; it reads MEYAARRNQKGAFEGFYKLIMRRNS. The chain crosses the membrane as a helical span at residues 26–42; that stretch reads VYVTFIIAGAFFGERAV. At 43-72 the chain is on the mitochondrial intermembrane side; it reads DYGVHKLWERNNVGKRYEDISVLGQRPVEE.

The protein belongs to the UQCR10/QCR9 family. Component of the ubiquinol-cytochrome c oxidoreductase (cytochrome b-c1 complex, complex III, CIII), a multisubunit enzyme composed of 10 subunits. The complex is composed of 3 respiratory subunits cytochrome b (MT-CYB), cytochrome c1 (CYC1-1 or CYC1-2) and Rieske protein (UCR1-1 or UCR1-2), 2 core protein subunits MPPalpha1 (or MPPalpha2) and MPPB, and 5 low-molecular weight protein subunits QCR7-1 (or QCR7-2), UCRQ-1 (or UCRQ-2), QCR9, UCRY and probably QCR6-1 (or QCR6-2). The complex exists as an obligatory dimer and forms supercomplexes (SCs) in the inner mitochondrial membrane with NADH-ubiquinone oxidoreductase (complex I, CI), resulting in different assemblies (supercomplexes SCI(1)III(2) and SCI(2)III(4)).

It localises to the mitochondrion inner membrane. Functionally, component of the ubiquinol-cytochrome c oxidoreductase, a multisubunit transmembrane complex that is part of the mitochondrial electron transport chain which drives oxidative phosphorylation. The respiratory chain contains 3 multisubunit complexes succinate dehydrogenase (complex II, CII), ubiquinol-cytochrome c oxidoreductase (cytochrome b-c1 complex, complex III, CIII) and cytochrome c oxidase (complex IV, CIV), that cooperate to transfer electrons derived from NADH and succinate to molecular oxygen, creating an electrochemical gradient over the inner membrane that drives transmembrane transport and the ATP synthase. The cytochrome b-c1 complex catalyzes electron transfer from ubiquinol to cytochrome c, linking this redox reaction to translocation of protons across the mitochondrial inner membrane, with protons being carried across the membrane as hydrogens on the quinol. In the process called Q cycle, 2 protons are consumed from the matrix, 4 protons are released into the intermembrane space and 2 electrons are passed to cytochrome c. In Arabidopsis thaliana (Mouse-ear cress), this protein is Cytochrome b-c1 complex subunit 9, mitochondrial (QCR9).